The sequence spans 302 residues: MDGVLLLNKPKGMTSHDCVAKVRRLLGIKKVGHTGTLDPNVSGVLPICLGKATRIAEFLTGATKTYEGEVTLGAATSTEDADGDIIAVQTVDRTIARAEIEAVFRSLTGDIEQTPPMYSAVKVNGKKLYEYARAGIEVERPTRRVTIYELELLDEREQFVGETVSFRFRVMCSKGTYVRTLAVTIGERLGYPAHMSDLIRTASGPFQLADCVTLEEVERRAADGTVDALLIPIEQALFHLPKYEISDKVAEKVKNGALLRLPAFLQELDGPVLLVTPEREAMALYVKHPARPGVMKPLKVFR.

Asp-38 acts as the Nucleophile in catalysis.

The protein belongs to the pseudouridine synthase TruB family. Type 1 subfamily.

The enzyme catalyses uridine(55) in tRNA = pseudouridine(55) in tRNA. Functionally, responsible for synthesis of pseudouridine from uracil-55 in the psi GC loop of transfer RNAs. This Geobacillus thermodenitrificans (strain NG80-2) protein is tRNA pseudouridine synthase B.